The sequence spans 1403 residues: MYRSSPFDLGSNITDFDAIRISLASPEKIRSWSHGEVTKPETINYRTFKPERDGLFCARIFGPVTDWECLCGKYKRMKHRGVICDKCGVEVTLSKVRRERLGHIELASPCSHVWFFKGLPSRIGHILDISLRDLESVLYFEAYVVVEPGDAPVKEREVIKDETKFRELDQQYRPTGFKALMGAEAIKELLKRVDAESLSVELREKMKNETSIQKRLKFAKRLKVAEAFRKSTNKPQWMILDVIPVIPPELRPLVPLDGGRFATSDLNDLYRRVINRNNRLKKLMDLHAPEVIVRNEKRMLQEAVDALFDNGRRGRVLRGANNRPLKSLSDTLKGKQGRFRQNLLGKRVDYSGRSVIVVGPELKLHQCGLPKKMALELFKPFIYHRLEQTGHCTTIKQAKELVEQQEPVVWDILEEVIKDHPVLLNRAPTLHRLGIQAFEPVLVEGKAIKIHPLVCTAFNADFDGDQMAVHIPLSPEAQIEASVLMLASHNILSPASGQPITVPTQDMVLGMYYLTKARPGSKGEGRAFANIEEVLLAKEMGEVETLTPIRLRYTGDVMDLTTAYDDQDVTHTEPVPFQRQYINTTVGRAILNDNLRRATAEMPYINGLLKKKGIGNLVNYVYLRFGLEITVQMLDQIKSLGFQYATRSGLSIGIDDMVISPNKAKVVKEAEQTVNSVQQQYLDGAITNGERYNKVVEIWSAITEKVADEMFGNMQQMDKAGEINPIYVMADSGARGSKQQIRQLSGMRGLMAKPSGEIIETPITANFREGLTVLEYFISTHGARKGLADTALKTADSGYLTRRLVDVAQDVIISEYDCGTVDGIYVSSIVESGEIIEPLRDRVIGRVSLEKIKDYEGNVVVDVNQEVTEDLANGIAAAGIERVKIRSVLTCESKRGVCALCYGRNLASGRLVELGEAVGVIAAQSIGEPGTQLTMRTFHIGGTASRVSEQSRLDAKNNGTARFHNLTVVRAKEGHLVVMNRNGAITVIDEKGREKERYAVVYGAKLRVEDGQQVKLGQVMVEWDPYTFAILTEIGGAVGFKDLHEGLTLHEEVDEVTGLSRHVVMDSPDEKRQPAIVIKGAKGTKRYLMPSRAHLMVLDGEEVFPGDVLAKIPRETTKTKDITGGLPRVVELFEARKPRETAVISEIDGTVKFGEVSKGQRKIYVVADDGTEREYSVPRGVHVNVQEGERIQAGEQLMDGPLNPHDILAVLGEKQLQSYLVNEIQEVYRLQGVNISDKHIETIVRQMMRWVKVEDVGDTNFLLEQQVDKFRFRAENEAAIASGGRPATGRPLMLGITKASLSTDSFISAASFQETTRVLTEASINGAVDHLRGLKENVIVGRLIPAGTGMEYYRNVALSPELEAQAQQVQEEVHQAYEEAERALELLRNEGEDETGNEELVAE.

The Zn(2+) site is built by Cys69, Cys71, Cys84, and Cys87. Positions 461, 463, and 465 each coordinate Mg(2+). Cys818, Cys891, Cys898, and Cys901 together coordinate Zn(2+). The segment at Leu1384–Glu1403 is disordered. Over residues Gly1391 to Glu1403 the composition is skewed to acidic residues.

It belongs to the RNA polymerase beta' chain family. In terms of assembly, the RNAP catalytic core consists of 2 alpha, 1 beta, 1 beta' and 1 omega subunit. When a sigma factor is associated with the core the holoenzyme is formed, which can initiate transcription. The cofactor is Mg(2+). Requires Zn(2+) as cofactor.

It carries out the reaction RNA(n) + a ribonucleoside 5'-triphosphate = RNA(n+1) + diphosphate. Its function is as follows. DNA-dependent RNA polymerase catalyzes the transcription of DNA into RNA using the four ribonucleoside triphosphates as substrates. The chain is DNA-directed RNA polymerase subunit beta' from Koribacter versatilis (strain Ellin345).